A 94-amino-acid chain; its full sequence is Pyrimidine/purine nucleoside phosphorylase (94 aa).

Belongs to the nucleoside phosphorylase PpnP family.

It carries out the reaction a purine D-ribonucleoside + phosphate = a purine nucleobase + alpha-D-ribose 1-phosphate. It catalyses the reaction adenosine + phosphate = alpha-D-ribose 1-phosphate + adenine. The catalysed reaction is cytidine + phosphate = cytosine + alpha-D-ribose 1-phosphate. The enzyme catalyses guanosine + phosphate = alpha-D-ribose 1-phosphate + guanine. It carries out the reaction inosine + phosphate = alpha-D-ribose 1-phosphate + hypoxanthine. It catalyses the reaction thymidine + phosphate = 2-deoxy-alpha-D-ribose 1-phosphate + thymine. The catalysed reaction is uridine + phosphate = alpha-D-ribose 1-phosphate + uracil. The enzyme catalyses xanthosine + phosphate = alpha-D-ribose 1-phosphate + xanthine. Functionally, catalyzes the phosphorolysis of diverse nucleosides, yielding D-ribose 1-phosphate and the respective free bases. Can use uridine, adenosine, guanosine, cytidine, thymidine, inosine and xanthosine as substrates. Also catalyzes the reverse reactions. This Pseudomonas entomophila (strain L48) protein is Pyrimidine/purine nucleoside phosphorylase.